A 538-amino-acid chain; its full sequence is Thermosome subunit beta (538 aa).

A disordered region spans residues 518-538; it reads SSGSSEEGMEEMGGMGGMPPM. Positions 528–538 are enriched in gly residues; that stretch reads EMGGMGGMPPM.

Belongs to the TCP-1 chaperonin family. In terms of assembly, forms a Heterooligomeric complex of two stacked eight-membered rings.

In terms of biological role, molecular chaperone; binds unfolded polypeptides in vitro, and has a weak ATPase activity. The polypeptide is Thermosome subunit beta (thsB) (Methanothermobacter thermautotrophicus (strain ATCC 29096 / DSM 1053 / JCM 10044 / NBRC 100330 / Delta H) (Methanobacterium thermoautotrophicum)).